We begin with the raw amino-acid sequence, 170 residues long: Large ribosomal subunit protein uL11 (170 aa).

Belongs to the universal ribosomal protein uL11 family. In terms of assembly, part of the ribosomal stalk of the 50S ribosomal subunit. Interacts with L10 and the large rRNA to form the base of the stalk. L10 forms an elongated spine to which L12 dimers bind in a sequential fashion forming a multimeric L10(L12)X complex.

Its function is as follows. Forms part of the ribosomal stalk which helps the ribosome interact with GTP-bound translation factors. This is Large ribosomal subunit protein uL11 from Desulfurococcus amylolyticus (strain DSM 18924 / JCM 16383 / VKM B-2413 / 1221n) (Desulfurococcus kamchatkensis).